A 413-amino-acid chain; its full sequence is Metacaspase-1A (413 aa).

The disordered stretch occupies residues 1–104; the sequence is MQNHHHQQSS…PTDPVAFGHG (104 aa). The segment covering 36-47 has biased composition (pro residues); sequence SPQPGYGAPPPH. Residues 49–58 show a composition bias toward low complexity; the sequence is GYGQPPSGYG. Over residues 75–85 the composition is skewed to polar residues; it reads GMNQYQNTYSH. Catalysis depends on residues His204 and Cys260.

This sequence belongs to the peptidase C14B family.

Involved in cell death (apoptosis). Required for the apoptotic-like loss of membrane phospholipid asymmetry at stationary phase and facilitates growth under conditions of endoplasmic reticulum stress. The protein is Metacaspase-1A (casA) of Aspergillus fumigatus (strain CBS 144.89 / FGSC A1163 / CEA10) (Neosartorya fumigata).